The chain runs to 1036 residues: MPKTIKKQNPSNTTLQYKKYLEQSKEKTAKAKNKDVSIDDLLKKPFLEEIKTNVLKKNKTTRASTATRGTSKVKKQIVESSIDFFDEKKRGVFIVPPAGTSVINDDRDDNKAVEETVSKTAISQNQLAHYANSELVETEQFELKPVALEHNQVLTSTRHSQERESIFEKAQLFWQIFVGDVRFGFWKNHTWIWLGFFDQHQNWYYFEVVETVELPQEHTAFIKRKQIDSCFWKPLVGNPNYGYIQNNIWVWKGFFDTKLNWIPDPVRFTLPMVEKATTTTPVVQIELPAPPTVTVVDQTSPPTAAVTVSTSQPVIEEQTTVFNQTTQLEQLSVSAPLLDQSEVETEMVEVPFVAPSTTTTQPQVVTVQAQPASSSIQFQEPIIKVEFVNESFDFKKPSQTAAAASQAPSQAINIALNEADLIDELVAVGTTATTALPQSELIQEVVVIDNGQPQQAGFHYVVDFLTSTAPLTVAEIELQEQELVNEFVTTTSRETTTFASTPVFEPVVIPTVESEEQLLENEFVESTVVSATSNEPNVASTPVVETVELTETPVSLEPLETVQLETAPVVTETVTVTEKAVEPEVLAVVEEAPLAVEPIVETSTTLAAETVEEAQVEQESTAVAVEPAIETESKATSEAQAELDWEALIGNSEYGYFDAEQNWIWTGYFDEDNKWVSTATAQTEANAEEVVLTADAETSELNTESDPSFEPEVEIQPEPEPNFDLETIPEPESIETTEPEPNFEPEVELEPEIEPNFESETEVQQELAQESSFESEPEPNFETEVEVQPESEIESKFEAEVQSEPKVSLNSDFETKPEAQAEVTPETLEVEATSEAPELQPETEATKVVDDVEEEQLDWELLIGNSNYGHYEPSGEWVWAGYFDDNQIWTPDASVEWARESDYTDLIGDEIYGRYNRKGEWIWYGYYDETGEWVLVDEHYQNHQPRISEAPRFWEQLIGNEDYGYYEDNEWKWYDGEFDSEGNWLVFHSSNAEDAKNIDIAKDIPVFESFDVDSIDADEWLDQFSDSDAKEVFGED.

Residues 697–727 are disordered; the sequence is ETSELNTESDPSFEPEVEIQPEPEPNFDLET. Residues 707–727 show a composition bias toward acidic residues; sequence PSFEPEVEIQPEPEPNFDLET. 3 repeat units span residues 718–723, 738–743, and 776–781. The interval 718 to 781 is 3 X 6 AA repeats of E-P-E-P-N-F; it reads EPEPNFDLET…SFESEPEPNF (64 aa). 2 disordered regions span residues 757–784 and 798–845; these read FESETEVQQELAQESSFESEPEPNFETE and EAEV…ETEA. Acidic residues predominate over residues 773–784; it reads FESEPEPNFETE.

The protein localises to the cell projection. It is found in the attachment organelle. In terms of biological role, protein cytoskeleton-associated which plays a role in gliding motility and perhaps also in mucociliary clearance. This Mycoplasma pneumoniae (strain ATCC 29342 / M129 / Subtype 1) (Mycoplasmoides pneumoniae) protein is Protein P200 (p200).